Here is a 412-residue protein sequence, read N- to C-terminus: Protein MT3510 (412 aa).

Lysine 227 bears the N6-(pyridoxal phosphate)lysine mark.

This sequence belongs to the DegT/DnrJ/EryC1 family.

In Mycobacterium tuberculosis (strain CDC 1551 / Oshkosh), this protein is Protein MT3510.